A 209-amino-acid polypeptide reads, in one-letter code: Fibroblast growth factor 21 (209 aa).

The N-terminal stretch at 1-28 (MDSDETGFEHSGLWVSVLAGLLLGACQA) is a signal peptide. Residues 143–209 (PLHLPGNKSP…SQGRSPSYAS (67 aa)) form a disordered region. Over residues 168–186 (PGLPPALPEPPGILAPQPP) the composition is skewed to pro residues.

The protein belongs to the heparin-binding growth factors family. Interacts (via C-terminus) with KLB; this interaction is direct. Interacts with FGFR4.

It is found in the secreted. In terms of biological role, stimulates glucose uptake in differentiated adipocytes via the induction of glucose transporter SLC2A1/GLUT1 expression (but not SLC2A4/GLUT4 expression). Activity requires the presence of KLB. Regulates systemic glucose homeostasis and insulin sensitivity. The protein is Fibroblast growth factor 21 (FGF21) of Homo sapiens (Human).